Consider the following 978-residue polypeptide: MVFCTYCGQSFTRDEHLERHILTHTNVKPFKCFTCHMSFARRDLLQRHYTVHGRDQNQNEIPAVNGMIPKSAGRTPIACSNCAKTKTKCDKKFPCSRCAGRNLRCTLRPTRRASKNANRVGATLESATDVPTEVTTVNVEATSKDTRAQENSSSPSSQKSGTPISIGPIMEETPDIAPPQPFTEQVNGGPTPPEFSPDLQESFMDHNLMSGFPGLTNPSKDSSDDGSSPRFLLDWSQMQMPLGYDNMIQSDLMLDPELSFDPNSVPLAPHADGILSIMPELANGGMESLITPFETPKMSRSFVELGLGNSNPAFHSHRHQSMPSVQSIPNSGNEMPAMIAAQDGWSAFRCTPTLPSSSCPKTAKLNLEQLEETLRNHEGWVSWSPRWEDNDLAGGGDHLTVMQLHESTRDKLLAIMQSFLHKALETHREGRGTSNGSHSPNPSGASNFVLLPPGRVLEYFLRSYSNSFERYFPLTSRSTLDANELMHCYNDRAASILVLLMIAQGAANIPSPEARMLTGGLTEACRISLFDLIERNIIMSGDPIVLHSALLFTVQAAWSGDKWQMDIAMGQRGMYFAMLRHSGVLDRSSHAASAQPQRTLEQLWTDWIQNESRSRLIYSWVMVDQDLALFHDTAPLFSVTEFGAPMPDADRLWHAKSAEQWSSTFERVHEFSSGFSSVGSGARPLSLRDLFRHFLDDDLIPMGIEMTPLQLRLLLHPLQSMVCQFSQLLSCFAPATYRTSISVHPNQAQPSSRNISQSSTRTRLAEVQALLQRWFDLAERYLKANPLCALMQTNLILFHLISLNAVTNFPEIERLARRENVDGTYHQLLWLHKRCIPDVEEAVFHCGQIFRLVRSMPRGVRPPWWAGAIYRVALILWTDSLTHKDALTSTSPQGNGMFPSPIAGPSFAIDALPPDHALIVRYLTKREGVPCVTKLDGSQMGLERAYPVLRHCVEVIDEGCSTRFSDAIRGKLERLSRG.

2 consecutive C2H2-type zinc fingers follow at residues 2-24 (VFCT…ILTH) and 30-52 (FKCF…YTVH). The segment at residues 79–105 (CSNCAKTKTKCDKKFPCSRCAGRNLRC) is a DNA-binding region (zn(2)-C6 fungal-type). 2 disordered regions span residues 113 to 231 (ASKN…SPRF) and 426 to 445 (THRE…PSGA). The span at 152–165 (SSSPSSQKSGTPIS) shows a compositional bias: low complexity. The span at 432 to 445 (GTSNGSHSPNPSGA) shows a compositional bias: polar residues.

The protein localises to the nucleus. Functionally, transcription factor; part of the gene cluster 29 that mediates the biosynthesis of dihydroxynaphthalene (DHN)-melanin, a bluish-green pigment forming a dark layer in the conidial wall that protects the conidia from UV radiations. The protein is Transcription factor MYCGRDRAFT_87993 of Zymoseptoria tritici (strain CBS 115943 / IPO323) (Speckled leaf blotch fungus).